A 207-amino-acid chain; its full sequence is ATP-dependent Clp protease proteolytic subunit (207 aa).

Residue Ser111 is the Nucleophile of the active site. His136 is a catalytic residue.

The protein belongs to the peptidase S14 family. Fourteen ClpP subunits assemble into 2 heptameric rings which stack back to back to give a disk-like structure with a central cavity, resembling the structure of eukaryotic proteasomes.

It localises to the cytoplasm. It carries out the reaction Hydrolysis of proteins to small peptides in the presence of ATP and magnesium. alpha-casein is the usual test substrate. In the absence of ATP, only oligopeptides shorter than five residues are hydrolyzed (such as succinyl-Leu-Tyr-|-NHMec, and Leu-Tyr-Leu-|-Tyr-Trp, in which cleavage of the -Tyr-|-Leu- and -Tyr-|-Trp bonds also occurs).. Cleaves peptides in various proteins in a process that requires ATP hydrolysis. Has a chymotrypsin-like activity. Plays a major role in the degradation of misfolded proteins. This Aliivibrio salmonicida (strain LFI1238) (Vibrio salmonicida (strain LFI1238)) protein is ATP-dependent Clp protease proteolytic subunit.